We begin with the raw amino-acid sequence, 97 residues long: Exodeoxyribonuclease 7 small subunit (97 aa).

The disordered stretch occupies residues Met-1–Asn-22.

Belongs to the XseB family. Heterooligomer composed of large and small subunits.

It localises to the cytoplasm. It catalyses the reaction Exonucleolytic cleavage in either 5'- to 3'- or 3'- to 5'-direction to yield nucleoside 5'-phosphates.. Functionally, bidirectionally degrades single-stranded DNA into large acid-insoluble oligonucleotides, which are then degraded further into small acid-soluble oligonucleotides. In Burkholderia lata (strain ATCC 17760 / DSM 23089 / LMG 22485 / NCIMB 9086 / R18194 / 383), this protein is Exodeoxyribonuclease 7 small subunit.